The primary structure comprises 450 residues: BAG family molecular chaperone regulator 5 (450 aa).

BAG domains lie at 9–86 (SIKR…EQNA), 95–167 (EAIF…ESCA), 182–260 (SVSK…DLDE), 275–350 (SILK…DLKE), and 365–442 (EHQS…YYLD).

As to quaternary structure, binds to the ATPase domain of HSP/HSC70 chaperones.

Functionally, co-chaperone for HSP/HSP70 proteins. It functions as a nucleotide-exchange factor promoting the release of ADP from HSP70, thereby activating HSP70-mediated protein refolding. This Gallus gallus (Chicken) protein is BAG family molecular chaperone regulator 5 (BAG5).